The chain runs to 619 residues: Phosphoenolpyruvate carboxykinase [GTP] (619 aa).

Residues Arg81 and 230 to 232 contribute to the substrate site; that span reads YGG. Residues Lys239 and His259 each contribute to the Mn(2+) site. Ser281 is a substrate binding site. GTP is bound at residue 282–287; that stretch reads ACGKTN. The active site involves Cys283. Residue Asp306 coordinates Mn(2+). 399–401 is a substrate binding site; the sequence is NSR. Residues Arg401, Arg432, and 525 to 528 contribute to the GTP site; that span reads YGQN.

The protein belongs to the phosphoenolpyruvate carboxykinase [GTP] family. Monomer. The cofactor is Mn(2+).

It catalyses the reaction oxaloacetate + GTP = phosphoenolpyruvate + GDP + CO2. In parasitic nematodes PEPCK carboxylates phosphoenolpyruvate to oxaloacetate thus introducing the products of glycolysis to mitochondrial metabolism. In terms of biological role, catalyzes the conversion of oxaloacetate (OAA) to phosphoenolpyruvate (PEP), the rate-limiting step in the metabolic pathway that produces glucose from lactate and other precursors derived from the citric acid cycle. This is Phosphoenolpyruvate carboxykinase [GTP] (PEPCK) from Haemonchus contortus (Barber pole worm).